The sequence spans 1309 residues: Target of rapamycin complex 2 subunit ste20 (1309 aa).

An REM-1 domain is found at 24–110 (DFIKKMNTTD…IESFQGENGE (87 aa)). The tract at residues 105–128 (QGENGEAKTGSTSLTRSASATVSR) is disordered. The segment covering 113–128 (TGSTSLTRSASATVSR) has biased composition (polar residues). Position 151 is a phosphoserine (Ser-151). The tract at residues 183–205 (NVNEKNNSSSEDTQPNGKRPSSL) is disordered. The span at 194 to 205 (DTQPNGKRPSSL) shows a compositional bias: polar residues. The next 6 membrane-spanning stretches (helical) occupy residues 285–305 (LFLD…WILS), 392–412 (LIDG…LVYL), 504–524 (VIDL…ESFL), 564–584 (TAVL…VCMI), 926–946 (LNHW…LEVC), and 984–1004 (LLLR…INFI). Position 1203 is a phosphothreonine (Thr-1203).

Belongs to the RICTOR family. The target of rapamycin complex 2 (TORC2) is composed of at least bit61, pop3/wat1, sin1, ste20 and tor1. Either Ser-203 or Ser-204 are phosphorylated as well.

It localises to the membrane. Its function is as follows. Component of TORC2, which regulates multiple cellular processes to control cell growth in response to environmental signals. TORC2 is required for cell survival under various stress conditions. TORC2 positively controls G1 cell-cycle arrest, sexual development and amino acid uptake. Positively regulates amino acid uptake through the control of expression of amino acid permeases. This chain is Target of rapamycin complex 2 subunit ste20, found in Schizosaccharomyces pombe (strain 972 / ATCC 24843) (Fission yeast).